Reading from the N-terminus, the 282-residue chain is Acetylglutamate kinase (282 aa).

Substrate-binding positions include 62–63 (GG), Arg84, and Asn178. Residues Lys196, Ser214, and 266-269 (EIFS) contribute to the L-arginine site.

In terms of assembly, homohexamer.

The protein localises to the cytoplasm. It catalyses the reaction N-acetyl-L-glutamate + ATP = N-acetyl-L-glutamyl 5-phosphate + ADP. The protein operates within amino-acid biosynthesis; L-arginine biosynthesis; N(2)-acetyl-L-ornithine from L-glutamate: step 2/4. Its activity is regulated as follows. Allosterically inhibited by arginine. In terms of biological role, catalyzes the ATP-dependent phosphorylation of N-acetyl-L-glutamate. This is Acetylglutamate kinase from Thermotoga maritima (strain ATCC 43589 / DSM 3109 / JCM 10099 / NBRC 100826 / MSB8).